A 271-amino-acid polypeptide reads, in one-letter code: Thiazole synthase (271 aa).

Lys-95 serves as the catalytic Schiff-base intermediate with DXP. 1-deoxy-D-xylulose 5-phosphate-binding positions include Gly-156, Ala-182–Gly-183, and Asn-204–Thr-205.

The protein belongs to the ThiG family. In terms of assembly, homotetramer. Forms heterodimers with either ThiH or ThiS.

It localises to the cytoplasm. It catalyses the reaction [ThiS sulfur-carrier protein]-C-terminal-Gly-aminoethanethioate + 2-iminoacetate + 1-deoxy-D-xylulose 5-phosphate = [ThiS sulfur-carrier protein]-C-terminal Gly-Gly + 2-[(2R,5Z)-2-carboxy-4-methylthiazol-5(2H)-ylidene]ethyl phosphate + 2 H2O + H(+). It functions in the pathway cofactor biosynthesis; thiamine diphosphate biosynthesis. Functionally, catalyzes the rearrangement of 1-deoxy-D-xylulose 5-phosphate (DXP) to produce the thiazole phosphate moiety of thiamine. Sulfur is provided by the thiocarboxylate moiety of the carrier protein ThiS. In vitro, sulfur can be provided by H(2)S. The polypeptide is Thiazole synthase (Yersinia pestis).